The sequence spans 324 residues: 4-hydroxybenzoyl-CoA reductase subunit beta (324 aa).

The FAD-binding PCMH-type domain occupies Asn2–Ala217. FAD contacts are provided by residues Pro29–Leu36, Thr111, Asn115, and Gln118. Residues Cys122, Cys138, Cys146, and Cys155 each coordinate [4Fe-4S] cluster. Residues Asp162 and Lys224 each contribute to the FAD site.

Heterohexamer of two alpha, two beta and two gamma subunits. FAD serves as cofactor. The cofactor is [4Fe-4S] cluster.

The catalysed reaction is oxidized 2[4Fe-4S]-[ferredoxin] + benzoyl-CoA + H2O = 4-hydroxybenzoyl-CoA + reduced 2[4Fe-4S]-[ferredoxin] + 2 H(+). With respect to regulation, inactivated by low concentrations of cyanide in vitro. Functionally, component of a complex that catalyzes the reductive dehydroxylation of 4-hydroxybenzoyl-CoA to benzoyl-CoA. Reaction is not reversible. Is a key enzyme in the anaerobic degradation of phenolic compounds. The protein is 4-hydroxybenzoyl-CoA reductase subunit beta (hcrB) of Thauera aromatica.